The sequence spans 392 residues: MKFSLISSCVALAVLVLSTEAAPNGKKVNIPLTKNKDYKPNAKNAIQKVLAKYHRHRSTSSSSNSTSTDGIGRVPVTDYYNDIEYFGQVKVGTPGVTLKLDFDTGSSDLWFASSLCTNCGYSQTKYNPNQSRTYAKDGRAWSISYGDGSSASGILGTDTVVLGGLTIQRQTIELARREASSFQNGPSDGLLGLGFNSITTVRGVKTPVDNLISQGLISNPVFGVYLGKESNGGGGEYIFGGYDSSKFKGSLTTIPVDNSNGWYGVTIRGASIGRSRVAGSFEAILDTGTSLLVLPNDVARSVASAYGARDNYDGTFSISCDTSRFQPLVFTIGSSTFEVPADSLVYEQNGYSCIAGFGYGDYDFAIFDDVFLKNNYVVFNPTVPQVQIATVA.

An N-terminal signal peptide occupies residues 1–21 (MKFSLISSCVALAVLVLSTEA). Residues 22-69 (APNGKKVNIPLTKNKDYKPNAKNAIQKVLAKYHRHRSTSSSSNSTSTD) constitute a propeptide, activation peptide. Residues 85-389 (YFGQVKVGTP…NPTVPQVQIA (305 aa)) form the Peptidase A1 domain. Residue Asp-103 is part of the active site. The cysteines at positions 116 and 119 are disulfide-linked. The active site involves Asp-286. Residues Cys-320 and Cys-353 are joined by a disulfide bond.

Belongs to the peptidase A1 family.

The enzyme catalyses Hydrolysis of proteins with broad specificity similar to that of pepsin A, preferring hydrophobic residues at P1 and P1'. Clots milk and activates trypsinogen. Does not cleave 4-Gln-|-His-5, but does cleave 10-His-|-Leu-11 and 12-Val-|-Glu-13 in B chain of insulin.. The sequence is that of Rhizopuspepsin-5 from Rhizopus niveus.